Consider the following 430-residue polypeptide: Histidine--tRNA ligase (430 aa).

The protein belongs to the class-II aminoacyl-tRNA synthetase family. In terms of assembly, homodimer.

It is found in the cytoplasm. It catalyses the reaction tRNA(His) + L-histidine + ATP = L-histidyl-tRNA(His) + AMP + diphosphate + H(+). This Acinetobacter baumannii (strain SDF) protein is Histidine--tRNA ligase.